The chain runs to 105 residues: MSTPNTLNADFDLMRSVAGITDARNEEIRAMLQAFIGRMSGVPPSVWGGLAAARFQDVVDRWNAESTRLYHVLHAIADTIRHNEAALREAGQIHARHIAAAGGDL.

This sequence belongs to the WXG100 family. CFP-10 subfamily. As to quaternary structure, forms a tight 1:1 complex with EsxT. Complex formation results in induction of alpha-helical conformation and stability against chemical denaturation.

The protein resides in the secreted. The sequence is that of ESAT-6-like protein EsxU from Mycobacterium tuberculosis (strain ATCC 25618 / H37Rv).